Here is a 345-residue protein sequence, read N- to C-terminus: Phosphoribosylformylglycinamidine cyclo-ligase (345 aa).

The protein belongs to the AIR synthase family.

The protein resides in the cytoplasm. It carries out the reaction 2-formamido-N(1)-(5-O-phospho-beta-D-ribosyl)acetamidine + ATP = 5-amino-1-(5-phospho-beta-D-ribosyl)imidazole + ADP + phosphate + H(+). The protein operates within purine metabolism; IMP biosynthesis via de novo pathway; 5-amino-1-(5-phospho-D-ribosyl)imidazole from N(2)-formyl-N(1)-(5-phospho-D-ribosyl)glycinamide: step 2/2. The protein is Phosphoribosylformylglycinamidine cyclo-ligase of Shewanella loihica (strain ATCC BAA-1088 / PV-4).